A 246-amino-acid chain; its full sequence is NAD-dependent protein deacylase (246 aa).

The 245-residue stretch at 1 to 245 (MKEFITKHRD…ELIREILDNP (245 aa)) folds into the Deacetylase sirtuin-type domain. An NAD(+)-binding site is contributed by 20–39 (GAGISAESGIPTFRGSEGLW). Tyrosine 64 and arginine 67 together coordinate substrate. 98–101 (QNVD) contacts NAD(+). Catalysis depends on histidine 116, which acts as the Proton acceptor. Zn(2+) is bound by residues cysteine 124, cysteine 127, cysteine 146, and cysteine 149. Residues 186–188 (GTS), 212–214 (NPE), and threonine 230 contribute to the NAD(+) site.

This sequence belongs to the sirtuin family. Class III subfamily. Zn(2+) serves as cofactor.

It localises to the cytoplasm. It carries out the reaction N(6)-acetyl-L-lysyl-[protein] + NAD(+) + H2O = 2''-O-acetyl-ADP-D-ribose + nicotinamide + L-lysyl-[protein]. The enzyme catalyses N(6)-succinyl-L-lysyl-[protein] + NAD(+) + H2O = 2''-O-succinyl-ADP-D-ribose + nicotinamide + L-lysyl-[protein]. Functionally, NAD-dependent lysine deacetylase and desuccinylase that specifically removes acetyl and succinyl groups on target proteins. Modulates the activities of several proteins which are inactive in their acylated form. In Leptospira interrogans serogroup Icterohaemorrhagiae serovar Lai (strain 56601), this protein is NAD-dependent protein deacylase.